Here is a 599-residue protein sequence, read N- to C-terminus: Putative sensor histidine kinase NtrY-like (599 aa).

A run of 4 helical transmembrane segments spans residues 17–37, 44–64, 85–105, and 285–305; these read ILILALAIASIISVCTTFYVI, FSTIIGFLLIDLAIFLILGIL, IVIAFSLVAAIPTIIVSVFSV, and IMFIFIALLLLFVAINFGVLF. In terms of domain architecture, HAMP spans 307–361; it reads AKIVKPIKKLVTATDKVKDGDLTVQVPENEVDKDEIGTLYAAFNRMIKQLSRQQR. The 212-residue stretch at 378–589 folds into the Histidine kinase domain; that stretch reads KVAHEIKNPL…IIDIKFDLKE (212 aa). Position 381 is a phosphohistidine; by autocatalysis (histidine 381).

It localises to the cell membrane. It catalyses the reaction ATP + protein L-histidine = ADP + protein N-phospho-L-histidine.. In terms of biological role, member of the two-component regulatory system RP614/RP562. This is Putative sensor histidine kinase NtrY-like from Rickettsia prowazekii (strain Madrid E).